A 412-amino-acid polypeptide reads, in one-letter code: Divalent metal cation transporter MntH (412 aa).

The Cytoplasmic portion of the chain corresponds to 1–19 (MTNYRVESSSGRAARKMRL). A helical membrane pass occupies residues 20–39 (ALMGPAFIAAIGYIDPGNFA). The Periplasmic portion of the chain corresponds to 40–51 (TNIQAGASFGYQ). Residues 52 to 71 (LLWVVVWANLMAMLIQILSA) traverse the membrane as a helical segment. Residues 72 to 95 (KLGIATGKNLAEQIRDHYPRPVVW) lie on the Cytoplasmic side of the membrane. The helical transmembrane segment at 96–118 (FYWVQAEIIAMATDLAEFIGAAI) threads the bilayer. At 119–125 (GFKLILG) the chain is on the periplasmic side. The chain crosses the membrane as a helical span at residues 126–145 (VSLLQGAVLTGIATFLILML). Topologically, residues 146–155 (QRRGQKPLEK) are cytoplasmic. The helical transmembrane segment at 156–175 (VIGGLLLFVAAAYIVELIFS) threads the bilayer. At 176–196 (QPNLAQLGKGMVIPSLPTSEA) the chain is on the periplasmic side. The helical transmembrane segment at 197-220 (VFLAAGVLGATIMPHVIYLHSSLT) threads the bilayer. Topologically, residues 221 to 238 (QHLHGGSRQQRYSATKWD) are cytoplasmic. A helical transmembrane segment spans residues 239 to 258 (VAIAMTIAGFVNLVMMATAA). The Periplasmic segment spans residues 259 to 276 (AAFHFSGHTGVADLDEAY). The chain crosses the membrane as a helical span at residues 277–297 (LTLQPLLSHAAATVFGLSLVA). Residues 298–327 (AGLSSTVVGTLAGQVVMQGFIRFHIPLWVR) are Cytoplasmic-facing. Residues 328-344 (RTVTMLPSFIVILMGLD) form a helical membrane-spanning segment. At 345–350 (PTRILV) the chain is on the periplasmic side. The helical transmembrane segment at 351 to 370 (MSQVLLSFGIALALVPLLIF) threads the bilayer. The Cytoplasmic segment spans residues 371–387 (TSDSKLMGDLVNSKRVK). A helical membrane pass occupies residues 388-406 (QTGWVIVVLVVALNIWLLV). At 407–412 (GTALGL) the chain is on the periplasmic side.

It belongs to the NRAMP family.

Its subcellular location is the cell inner membrane. Functionally, h(+)-stimulated, divalent metal cation uptake system. This is Divalent metal cation transporter MntH from Shigella flexneri serotype 5b (strain 8401).